A 331-amino-acid chain; its full sequence is Glycerophosphodiester phosphodiesterase 1 (331 aa).

Over 1–3 the chain is Cytoplasmic; it reads MWL. Residues 4–24 traverse the membrane as a helical segment; that stretch reads WEDQGGLLGPFSFLLLVLLLV. Over 25–247 the chain is Lumenal; sequence TRSPVNACLL…KPRYDTFWKH (223 aa). The region spanning 65–331 is the GP-PDE domain; it reads ISAIAHRGGS…SMVEDCEPHF (267 aa). Residues glutamate 97 and aspartate 99 each coordinate Mg(2+). The N-linked (GlcNAc...) asparagine glycan is linked to asparagine 168. Aspartate 174 is a binding site for Mg(2+). Asparagine 198 carries an N-linked (GlcNAc...) asparagine glycan. The helical transmembrane segment at 248–268 threads the bilayer; that stretch reads FIFVMMDILLDWSMHNILWYL. The Cytoplasmic portion of the chain corresponds to 269 to 331; the sequence is CGISAFLMQK…SMVEDCEPHF (63 aa).

It belongs to the glycerophosphoryl diester phosphodiesterase family. In terms of assembly, interacts with PRAF2. Interacts with RGS16. Mg(2+) is required as a cofactor. In terms of processing, N-glycosylated. In terms of tissue distribution, widely expressed.

The protein localises to the cell membrane. Its subcellular location is the cytoplasmic vesicle membrane. The enzyme catalyses sn-glycero-3-phospho-1D-myo-inositol + H2O = myo-inositol + sn-glycerol 3-phosphate + H(+). It catalyses the reaction 1-O-(1Z-octadecenyl)-sn-glycero-3-phospho-(N-5Z,8Z,11Z,14Z-eicosatetraenoyl)-ethanolamine + H2O = 1-O-(1Z-octadecenyl)-sn-glycero-3-phosphate + N-(5Z,8Z,11Z,14Z-eicosatetraenoyl)-ethanolamine + H(+). The catalysed reaction is 1-O-(1Z-octadecenyl)-sn-glycero-3-phospho-(N-9Z-octadecenoyl)-ethanolamine + H2O = 1-O-(1Z-octadecenyl)-sn-glycero-3-phosphate + N-(9Z-octadecenoyl) ethanolamine + H(+). It carries out the reaction 1-O-(1Z-octadecenyl)-sn-glycero-3-phospho-N-hexadecanoyl-ethanolamine + H2O = 1-O-(1Z-octadecenyl)-sn-glycero-3-phosphate + N-hexadecanoylethanolamine + H(+). The enzyme catalyses N-(4Z,7Z,10Z,13Z,16Z,19Z)-docosahexaenoyl-sn-glycero-3-phosphoethanolamine + H2O = N-(4Z,7Z,10Z,13Z,16Z,19Z)-docosahexaenoyl ethanolamine + sn-glycerol 3-phosphate + H(+). It catalyses the reaction N-eicosanoyl-sn-glycero-3-phosphoethanolamine + H2O = N-eicosanoyl ethanolamine + sn-glycerol 3-phosphate + H(+). The catalysed reaction is N-hexadecanoyl-sn-glycero-3-phosphoethanolamine + H2O = N-hexadecanoylethanolamine + sn-glycerol 3-phosphate + H(+). It carries out the reaction N-(9Z-octadecenoyl)-sn-glycero-3-phosphoethanolamine + H2O = N-(9Z-octadecenoyl) ethanolamine + sn-glycerol 3-phosphate + H(+). The enzyme catalyses N-(5Z,8Z,11Z,14Z-eicosatetraenoyl)-sn-glycero-3-phosphoethanolamine + H2O = N-(5Z,8Z,11Z,14Z-eicosatetraenoyl)-ethanolamine + sn-glycerol 3-phosphate + H(+). Its activity is regulated as follows. Inhibited by EDTA, calcium chloride, and zinc chloride. Enhanced by magnesium chloride. Glycerophosphodiester phosphodiesterase activity can be modulated by G-protein signaling pathways. In terms of biological role, hydrolyzes the phosphodiester bond of glycerophosphodiesters such as glycerophosphoinositol (GroPIns) and glycerophosphoethanolamine (GroPEth), to yield a glycerol phosphate and an alcohol. Hydrolyzes glycerophospho-N-acylethanolamines to N-acylethanolamines in the brain and participates in bioactive N-acylethanolamine biosynthesis such as anandamide (an endocannabinoid), N-palmitoylethanolamine (an anti-inflammatory), and N-oleoylethanolamine (an anorexic). In addition, has a lysophospholipase D activity by hydrolyzing N-acyl-lysoplasmenylethanolamine (N-acyl-lysoPlsEt) to N-acylethanolamine. However lysophospholipase D activity is lower than glycerophosphodiester phosphodiesterase activity. Has little or no activity towards glycerophosphocholine. The polypeptide is Glycerophosphodiester phosphodiesterase 1 (Homo sapiens (Human)).